Consider the following 290-residue polypeptide: Putative neuropeptide Y receptor type 6 (290 aa).

Over 1-39 (MEVSLNHPASNTTSTKNNNSAFFYFESCQPPSPALLLLC) the chain is Extracellular. N11 carries N-linked (GlcNAc...) asparagine glycosylation. The chain crosses the membrane as a helical span at residues 40–60 (IAYTVVLIVGLFGNLSLIIII). The Cytoplasmic portion of the chain corresponds to 61-83 (FKKQRKAQNFTSILIANLSLSDT). Residues 84–104 (LVCVMCIHFTIIYTLMDHWIF) form a helical membrane-spanning segment. Over 105–111 (GDTMCRL) the chain is Extracellular. The cysteines at positions 109 and 196 are disulfide-linked. A helical membrane pass occupies residues 112-132 (TSYVQSVSISVSIFSLVFTAV). Residues 133–150 (ERYQLIVNPRGWKPSVTH) are Cytoplasmic-facing. Residues 151 to 171 (AYWGITLIWLFSLLLSIPFFL) traverse the membrane as a helical segment. Topologically, residues 172–206 (SYHLTDEPFRNLSLPTDLYTHQVACVENWPSKKDR) are extracellular. The helical transmembrane segment at 207 to 227 (LLFTTSLFLLQYFVPLGFILI) threads the bilayer. The Cytoplasmic portion of the chain corresponds to 228–258 (CYLKIVICLRRRNAKVDKKKENEGRLNENKR). The helical transmembrane segment at 259 to 279 (INTMLISIVVTFGACWLPRIS) threads the bilayer. The Extracellular portion of the chain corresponds to 280–290 (SMSSLTGIMRC).

Belongs to the G-protein coupled receptor 1 family. In terms of tissue distribution, expressed in heart, skeletal muscle, gastrointestinal tissues, spleen, brain and adrenal glands.

The protein resides in the membrane. In terms of biological role, when expressed, is unable to bind pancreatic polypeptide (PP), neuropeptide Y (NPY), or peptide YY (PYY), suggesting that either it is functionally inactive or that it may have acquired a pancreatic polypeptide-independent function. In Homo sapiens (Human), this protein is Putative neuropeptide Y receptor type 6 (NPY6R).